The primary structure comprises 99 residues: Small ribosomal subunit protein bS20 (99 aa).

The protein belongs to the bacterial ribosomal protein bS20 family.

Binds directly to 16S ribosomal RNA. This is Small ribosomal subunit protein bS20 from Thermomicrobium roseum (strain ATCC 27502 / DSM 5159 / P-2).